The primary structure comprises 601 residues: Aspartate--tRNA(Asp/Asn) ligase (601 aa).

E174 is an L-aspartate binding site. The aspartate stretch occupies residues 198-201 (QLFK). R220 contributes to the L-aspartate binding site. Residues 220 to 222 (RDE) and Q229 each bind ATP. H459 serves as a coordination point for L-aspartate. E493 lines the ATP pocket. L-aspartate is bound at residue R500. Residue 545 to 548 (GLDR) participates in ATP binding.

It belongs to the class-II aminoacyl-tRNA synthetase family. Type 1 subfamily. In terms of assembly, homodimer.

It localises to the cytoplasm. It catalyses the reaction tRNA(Asx) + L-aspartate + ATP = L-aspartyl-tRNA(Asx) + AMP + diphosphate. In terms of biological role, aspartyl-tRNA synthetase with relaxed tRNA specificity since it is able to aspartylate not only its cognate tRNA(Asp) but also tRNA(Asn). Reaction proceeds in two steps: L-aspartate is first activated by ATP to form Asp-AMP and then transferred to the acceptor end of tRNA(Asp/Asn). The chain is Aspartate--tRNA(Asp/Asn) ligase from Variovorax paradoxus (strain S110).